A 286-amino-acid polypeptide reads, in one-letter code: 4-hydroxybenzoate octaprenyltransferase (286 aa).

Helical transmembrane passes span 20–40, 43–63, 83–103, 135–155, 160–180, 209–229, and 234–254; these read IGIL…ADGM, PMIL…GCAI, LATG…LSLC, FFAM…PMAF, GTVP…VIAY, VAGI…AGIL, and IWFY…YTMI.

Belongs to the UbiA prenyltransferase family. Mg(2+) serves as cofactor.

The protein resides in the cell inner membrane. The catalysed reaction is all-trans-octaprenyl diphosphate + 4-hydroxybenzoate = 4-hydroxy-3-(all-trans-octaprenyl)benzoate + diphosphate. It participates in cofactor biosynthesis; ubiquinone biosynthesis. In terms of biological role, catalyzes the prenylation of para-hydroxybenzoate (PHB) with an all-trans polyprenyl group. Mediates the second step in the final reaction sequence of ubiquinone-8 (UQ-8) biosynthesis, which is the condensation of the polyisoprenoid side chain with PHB, generating the first membrane-bound Q intermediate 3-octaprenyl-4-hydroxybenzoate. The polypeptide is 4-hydroxybenzoate octaprenyltransferase (Nitrosomonas eutropha (strain DSM 101675 / C91 / Nm57)).